A 333-amino-acid chain; its full sequence is MTDAPNLKGFDARLREEAAEEPTLEIPEQPPTKKTQIIAIYGKGGSGKSFTLANLSHMMAEMGKRVLLIGCDPKSDTTSLLFGGKNCPTIIETATKKKLAGEEVKVGDVCFKSGGVFAMELGGPEVGRGCGGRGIIHGFELLEKLGFHDWDFDFVLLDFLGDVVCGGFGLPIARDMAQKVIVIGSNDLQSLYVANNVCNAVEYFRKLGGNVGVAGIVINKDDGTGEAQAFAREVGIPILAAIPADEELRRKSAAYQIVGSHATPWGKLFEELAGNVADAPPLRPRPLSPDALLALFETDEETRVVDLVPATDEDLRGSNAAPKKSLEVIYDDV.

Residues 1-22 (MTDAPNLKGFDARLREEAAEEP) form a disordered region. Residues 45-50 (GSGKSF) and Lys74 each bind ATP. Position 49 (Ser49) interacts with Mg(2+). Positions 130 and 165 each coordinate [4Fe-4S] cluster. 219 to 220 (NK) serves as a coordination point for ATP.

This sequence belongs to the NifH/BchL/ChlL family. As to quaternary structure, homodimer. Chlorophyllide reductase is composed of three subunits; BchX, BchY and BchZ. Requires [4Fe-4S] cluster as cofactor.

The catalysed reaction is 3-deacetyl-3-vinylbacteriochlorophyllide a + 2 oxidized [2Fe-2S]-[ferredoxin] + ADP + phosphate = chlorophyllide a + 2 reduced [2Fe-2S]-[ferredoxin] + ATP + H2O + H(+). The enzyme catalyses bacteriochlorophyllide a + 2 oxidized [2Fe-2S]-[ferredoxin] + ADP + phosphate = 3-acetyl-3-devinylchlorophyllide a + 2 reduced [2Fe-2S]-[ferredoxin] + ATP + H2O + H(+). It catalyses the reaction 3-deacetyl-3-(1-hydroxyethyl)bacteriochlorophyllide a + 2 oxidized [2Fe-2S]-[ferredoxin] + ADP + phosphate = 3-devinyl-3-(1-hydroxyethyl)chlorophyllide a + 2 reduced [2Fe-2S]-[ferredoxin] + ATP + H2O + H(+). It functions in the pathway porphyrin-containing compound metabolism; bacteriochlorophyll biosynthesis. In terms of biological role, converts chlorophylls (Chl) into bacteriochlorophylls (BChl) by reducing ring B of the tetrapyrrole. The polypeptide is Chlorophyllide reductase 35.5 kDa chain (bchX) (Rhodobacter capsulatus (strain ATCC BAA-309 / NBRC 16581 / SB1003)).